Consider the following 359-residue polypeptide: Queuine tRNA-ribosyltransferase (359 aa).

The active-site Proton acceptor is Asp92. Substrate is bound by residues 92-96, Asp146, Gln189, and Gly216; that span reads DSGGF. The interval 245 to 251 is RNA binding; that stretch reads GVGKPAD. Residue Asp264 is the Nucleophile of the active site. An RNA binding; important for wobble base 34 recognition region spans residues 269–273; the sequence is TRSGR. Zn(2+) contacts are provided by Cys302, Cys304, Cys307, and His333.

Belongs to the queuine tRNA-ribosyltransferase family. In terms of assembly, homodimer. Within each dimer, one monomer is responsible for RNA recognition and catalysis, while the other monomer binds to the replacement base PreQ1. The cofactor is Zn(2+).

The catalysed reaction is 7-aminomethyl-7-carbaguanine + guanosine(34) in tRNA = 7-aminomethyl-7-carbaguanosine(34) in tRNA + guanine. The protein operates within tRNA modification; tRNA-queuosine biosynthesis. Functionally, catalyzes the base-exchange of a guanine (G) residue with the queuine precursor 7-aminomethyl-7-deazaguanine (PreQ1) at position 34 (anticodon wobble position) in tRNAs with GU(N) anticodons (tRNA-Asp, -Asn, -His and -Tyr). Catalysis occurs through a double-displacement mechanism. The nucleophile active site attacks the C1' of nucleotide 34 to detach the guanine base from the RNA, forming a covalent enzyme-RNA intermediate. The proton acceptor active site deprotonates the incoming PreQ1, allowing a nucleophilic attack on the C1' of the ribose to form the product. After dissociation, two additional enzymatic reactions on the tRNA convert PreQ1 to queuine (Q), resulting in the hypermodified nucleoside queuosine (7-(((4,5-cis-dihydroxy-2-cyclopenten-1-yl)amino)methyl)-7-deazaguanosine). The chain is Queuine tRNA-ribosyltransferase from Rickettsia bellii (strain RML369-C).